The following is a 488-amino-acid chain: Kynurenine 3-monooxygenase 2 (488 aa).

This sequence belongs to the aromatic-ring hydroxylase family. KMO subfamily. Requires FAD as cofactor.

It localises to the mitochondrion outer membrane. It carries out the reaction L-kynurenine + NADPH + O2 + H(+) = 3-hydroxy-L-kynurenine + NADP(+) + H2O. It functions in the pathway cofactor biosynthesis; NAD(+) biosynthesis; quinolinate from L-kynurenine: step 1/3. Functionally, catalyzes the hydroxylation of L-kynurenine (L-Kyn) to form 3-hydroxy-L-kynurenine (L-3OHKyn). Required for synthesis of quinolinic acid. This chain is Kynurenine 3-monooxygenase 2 (bna4-2), found in Aspergillus niger (strain ATCC MYA-4892 / CBS 513.88 / FGSC A1513).